Reading from the N-terminus, the 127-residue chain is Aspartate 1-decarboxylase (127 aa).

The Schiff-base intermediate with substrate; via pyruvic acid role is filled by Ser-25. A Pyruvic acid (Ser) modification is found at Ser-25. Residue Thr-57 coordinates substrate. Tyr-58 serves as the catalytic Proton donor. Position 73-75 (73-75) interacts with substrate; that stretch reads GAA.

Belongs to the PanD family. As to quaternary structure, heterooctamer of four alpha and four beta subunits. Pyruvate is required as a cofactor. Post-translationally, is synthesized initially as an inactive proenzyme, which is activated by self-cleavage at a specific serine bond to produce a beta-subunit with a hydroxyl group at its C-terminus and an alpha-subunit with a pyruvoyl group at its N-terminus.

It localises to the cytoplasm. The catalysed reaction is L-aspartate + H(+) = beta-alanine + CO2. Its pathway is cofactor biosynthesis; (R)-pantothenate biosynthesis; beta-alanine from L-aspartate: step 1/1. Functionally, catalyzes the pyruvoyl-dependent decarboxylation of aspartate to produce beta-alanine. The sequence is that of Aspartate 1-decarboxylase from Staphylococcus aureus (strain MSSA476).